The chain runs to 498 residues: POU domain protein 2, isoform A (498 aa).

Over residues 1–30 (MMVLQQQQQQRLWDATTTSNTNTQTQQSAN) the composition is skewed to low complexity. The segment at 1–35 (MMVLQQQQQQRLWDATTTSNTNTQTQQSANVESTP) is disordered. Ser72, Ser211, Ser215, Ser217, and Ser219 each carry phosphoserine. The disordered stretch occupies residues 191-273 (QMKQQQREDP…STPKPTSGLT (83 aa)). Residues 207 to 222 (PLAKSPLRSPSLSPVP) show a composition bias toward low complexity. Positions 228-251 (QQRTPPNSMTANSLGMSSAVMTPN) are enriched in polar residues. Over residues 252 to 270 (TPSMQQQPQLQQSTPKPTS) the composition is skewed to low complexity. The POU-specific domain maps to 286–360 (EETTDLEELE…LLQKWLEDAD (75 aa)). The segment at residues 391–450 (RRKKRTSIETTVRTTLEKAFLMNCKPTSEEISQLSERLNMDKEVIRVWFCNRRQKEKRIN) is a DNA-binding region (homeobox).

It belongs to the POU transcription factor family. Class-2 subfamily. In terms of tissue distribution, initial expression in cellular blastoderm stage, then in ectodermal stripes during germband extension. Broad expression in the neuroectoderm followed by limitation to discrete subsets of CNS cells, and expression in specific PNS neurons and support cells.

The protein resides in the nucleus. DNA-binding regulatory protein implicated in early development. Involved in neuronal cell fate decision. May act as an octamer-dependent activator of transcription. Could also play an early role in specific ectodermal cells, and a subsequent role in the embryonic nervous system. In Drosophila melanogaster (Fruit fly), this protein is POU domain protein 2, isoform A (pdm2).